The chain runs to 462 residues: Protein MOS2 (462 aa).

Low complexity predominate over residues 1–10; it reads MKLSFSLPSK. The tract at residues 1-32 is disordered; sequence MKLSFSLPSKSKPKVTATTADGNNAVDDGTSK. The 47-residue stretch at 156-202 folds into the G-patch domain; the sequence is VDGFGAALMAGYGWKPGKGIGKNAKEDVEIKEYKKWTAKEGLGFDPD. The region spanning 231 to 258 is the KOW 1 domain; it reads VFFVGKEVRIIAGRDVGLKGKIVEKPGS. Residues 301 to 336 are compositionally biased toward basic and acidic residues; sequence DREKDKKTSGRGRGAERGSRSEVRASEKQDRGQTRE. Positions 301–340 are disordered; sequence DREKDKKTSGRGRGAERGSRSEVRASEKQDRGQTRERKVK. A KOW 2 domain is found at 401-428; the sequence is LPRRGGPVLVLSGKHKGVYGNLVEKDLD.

Belongs to the MOS2 family.

The protein resides in the nucleus. In terms of biological role, required for innate and induced resistance to pathogens such as compatible and incompatible isolates of P.syringae and P.parasitica. The sequence is that of Protein MOS2 (MOS2) from Arabidopsis thaliana (Mouse-ear cress).